The following is a 432-amino-acid chain: UDP-N-acetylmuramoylalanine--D-glutamate ligase (432 aa).

98–104 provides a ligand contact to ATP; sequence GTNGKST.

It belongs to the MurCDEF family.

The protein localises to the cytoplasm. It carries out the reaction UDP-N-acetyl-alpha-D-muramoyl-L-alanine + D-glutamate + ATP = UDP-N-acetyl-alpha-D-muramoyl-L-alanyl-D-glutamate + ADP + phosphate + H(+). It functions in the pathway cell wall biogenesis; peptidoglycan biosynthesis. Cell wall formation. Catalyzes the addition of glutamate to the nucleotide precursor UDP-N-acetylmuramoyl-L-alanine (UMA). This Fusobacterium nucleatum subsp. nucleatum (strain ATCC 25586 / DSM 15643 / BCRC 10681 / CIP 101130 / JCM 8532 / KCTC 2640 / LMG 13131 / VPI 4355) protein is UDP-N-acetylmuramoylalanine--D-glutamate ligase.